The primary structure comprises 374 residues: Erythronate-4-phosphate dehydrogenase (374 aa).

Substrate-binding residues include Ser-53 and Thr-75. Asp-160 is an NAD(+) binding site. The active site involves Arg-222. Asp-246 lines the NAD(+) pocket. Residue Glu-251 is part of the active site. His-268 acts as the Proton donor in catalysis. Residue Gly-271 participates in NAD(+) binding. Tyr-272 contacts substrate.

The protein belongs to the D-isomer specific 2-hydroxyacid dehydrogenase family. PdxB subfamily. Homodimer.

It localises to the cytoplasm. The enzyme catalyses 4-phospho-D-erythronate + NAD(+) = (R)-3-hydroxy-2-oxo-4-phosphooxybutanoate + NADH + H(+). Its pathway is cofactor biosynthesis; pyridoxine 5'-phosphate biosynthesis; pyridoxine 5'-phosphate from D-erythrose 4-phosphate: step 2/5. In terms of biological role, catalyzes the oxidation of erythronate-4-phosphate to 3-hydroxy-2-oxo-4-phosphonooxybutanoate. This is Erythronate-4-phosphate dehydrogenase from Psychrobacter sp. (strain PRwf-1).